A 130-amino-acid polypeptide reads, in one-letter code: Large ribosomal subunit protein bL20 (130 aa).

It belongs to the bacterial ribosomal protein bL20 family.

Functionally, binds directly to 23S ribosomal RNA and is necessary for the in vitro assembly process of the 50S ribosomal subunit. It is not involved in the protein synthesizing functions of that subunit. This Clavibacter michiganensis subsp. michiganensis (strain NCPPB 382) protein is Large ribosomal subunit protein bL20.